The chain runs to 512 residues: Activin receptor type-2B (512 aa).

An N-terminal signal peptide occupies residues Met-1–Gly-18. Residues Ser-19 to Thr-137 lie on the Extracellular side of the membrane. Disulfide bonds link Cys-29–Cys-59, Cys-49–Cys-77, Cys-84–Cys-103, Cys-90–Cys-102, and Cys-104–Cys-109. Residues Asn-42 and Asn-65 are each glycosylated (N-linked (GlcNAc...) asparagine). The chain crosses the membrane as a helical span at residues Val-138–Trp-158. Over Met-159–Ile-512 the chain is Cytoplasmic. The region spanning Leu-190–Leu-480 is the Protein kinase domain. ATP contacts are provided by residues Lys-196–Val-204 and Lys-217. Asp-321 functions as the Proton acceptor in the catalytic mechanism. Positions Asp-491–Ile-512 are interaction with DYNLT1.

Belongs to the protein kinase superfamily. TKL Ser/Thr protein kinase family. TGFB receptor subfamily. As to quaternary structure, forms an activin receptor complex with activin type II receptors such as ACVR1B. Interacts with VPS39. Interacts with DYNLT1. Interacts with BMP3. Interacts with BMP2. Interacts with BMP6. It depends on Mg(2+) as a cofactor. The cofactor is Mn(2+). In terms of processing, phosphorylated. Constitutive phosphorylation is in part catalyzed by its own kinase activity.

The protein localises to the cell membrane. The catalysed reaction is L-threonyl-[receptor-protein] + ATP = O-phospho-L-threonyl-[receptor-protein] + ADP + H(+). It carries out the reaction L-seryl-[receptor-protein] + ATP = O-phospho-L-seryl-[receptor-protein] + ADP + H(+). Functionally, transmembrane serine/threonine kinase activin type-2 receptor forming an activin receptor complex with activin type-1 serine/threonine kinase receptors (ACVR1, ACVR1B or ACVR1c). Transduces the activin signal from the cell surface to the cytoplasm and is thus regulating many physiological and pathological processes including neuronal differentiation and neuronal survival, hair follicle development and cycling, FSH production by the pituitary gland, wound healing, extracellular matrix production, immunosuppression and carcinogenesis. Activin is also thought to have a paracrine or autocrine role in follicular development in the ovary. Within the receptor complex, the type-2 receptors act as a primary activin receptors (binds activin-A/INHBA, activin-B/INHBB as well as inhibin-A/INHA-INHBA). The type-1 receptors like ACVR1B act as downstream transducers of activin signals. Activin binds to type-2 receptor at the plasma membrane and activates its serine-threonine kinase. The activated receptor type-2 then phosphorylates and activates the type-1 receptor. Once activated, the type-1 receptor binds and phosphorylates the SMAD proteins SMAD2 and SMAD3, on serine residues of the C-terminal tail. Soon after their association with the activin receptor and subsequent phosphorylation, SMAD2 and SMAD3 are released into the cytoplasm where they interact with the common partner SMAD4. This SMAD complex translocates into the nucleus where it mediates activin-induced transcription. Inhibitory SMAD7, which is recruited to ACVR1B through FKBP1A, can prevent the association of SMAD2 and SMAD3 with the activin receptor complex, thereby blocking the activin signal. Activin signal transduction is also antagonized by the binding to the receptor of inhibin-B via the IGSF1 inhibin coreceptor. The sequence is that of Activin receptor type-2B (ACVR2B) from Homo sapiens (Human).